The sequence spans 172 residues: Peptidyl-prolyl cis-trans isomerase (172 aa).

Positions 7–170 (FFDMTVGGAP…KVVKVADCGQ (164 aa)) constitute a PPIase cyclophilin-type domain.

It belongs to the cyclophilin-type PPIase family.

Its subcellular location is the cytoplasm. The catalysed reaction is [protein]-peptidylproline (omega=180) = [protein]-peptidylproline (omega=0). Binds cyclosporin A (CsA). CsA mediates some of its effects via an inhibitory action on PPIase. Functionally, PPIases accelerate the folding of proteins. It catalyzes the cis-trans isomerization of proline imidic peptide bonds in oligopeptides. The sequence is that of Peptidyl-prolyl cis-trans isomerase (CYP) from Zea mays (Maize).